We begin with the raw amino-acid sequence, 192 residues long: Glycerol-3-phosphate acyltransferase (192 aa).

Transmembrane regions (helical) follow at residues 4–24, 54–74, 80–100, 112–132, and 154–174; these read MFWL…AILL, LAIL…LIAS, IAQQ…PVYF, AGVL…AWLL, and LLAW…LLIV.

Belongs to the PlsY family. As to quaternary structure, probably interacts with PlsX.

The protein resides in the cell inner membrane. The enzyme catalyses an acyl phosphate + sn-glycerol 3-phosphate = a 1-acyl-sn-glycero-3-phosphate + phosphate. Its pathway is lipid metabolism; phospholipid metabolism. Catalyzes the transfer of an acyl group from acyl-phosphate (acyl-PO(4)) to glycerol-3-phosphate (G3P) to form lysophosphatidic acid (LPA). This enzyme utilizes acyl-phosphate as fatty acyl donor, but not acyl-CoA or acyl-ACP. This Pseudomonas syringae pv. syringae (strain B728a) protein is Glycerol-3-phosphate acyltransferase.